Consider the following 348-residue polypeptide: Protein arginine N-methyltransferase 1 (348 aa).

An SAM-dependent MTase PRMT-type domain is found at 24 to 342; the sequence is KDYYFDSYAH…KGEVCDLNEQ (319 aa). S-adenosyl-L-methionine-binding residues include His-37, Arg-46, Gly-70, Glu-92, and Glu-121. Residues Glu-139 and Glu-148 contribute to the active site.

It belongs to the class I-like SAM-binding methyltransferase superfamily. Protein arginine N-methyltransferase family. Interacts with daf-16. Interacts with pgl-1 and pgl-3. Interacts with alg-1. Widely expressed in pharyngeal, body wall muscle, intestinal and vulval cells.

The protein localises to the cytoplasm. Its subcellular location is the nucleus. The catalysed reaction is L-arginyl-[protein] + 2 S-adenosyl-L-methionine = N(omega),N(omega)-dimethyl-L-arginyl-[protein] + 2 S-adenosyl-L-homocysteine + 2 H(+). It catalyses the reaction L-arginyl-[protein] + S-adenosyl-L-methionine = N(omega)-methyl-L-arginyl-[protein] + S-adenosyl-L-homocysteine + H(+). Its function is as follows. Arginine methyltransferase that methylates (mono and asymmetric dimethylation) the guanidino nitrogens of arginyl residues present in target proteins. Catalyzes the formation of monomethylarginine and asymmetric dimethylarginine on histones H2A and H4, a specific tag for epigenetic transcriptional activation. Catalyzes asymmetric arginine dimethylation of mitochondrial proteins necessary for mitochondrial oxidative phosphorylation activity and thus aerobic respiration and ATP synthesis, and the mitochondrial stress response. Methylates arginine residues in P-granule components pgl-1 and pgl-3 to promote P-granule degradation by autophagy in somatic cells to ensure exclusive localization of the P-granules in germ cells. Modulates the interaction of P-granule proteins epg-2 and sepa-1. Methylates arginine residues in daf-16, which blocks ftt-2 binding to daf-16, prevents akt-mediated phosphorylation and allows for daf-16 to translocate to the nucleus. In turn, association with daf-16 therefore allows for the transcriptional activation of daf-16 and regulation of longevity-related genes. Maintains lifespan by modulating daf-16 activity downstream of the daf-2 signaling pathway. Plays a role in heat and oxidative stress resistance. Role in stress resistance and also fat storage may be in association with the daf-2 signaling pathway. Required for normal feeding behavior. The sequence is that of Protein arginine N-methyltransferase 1 from Caenorhabditis elegans.